Consider the following 846-residue polypeptide: Cap-specific mRNA (nucleoside-2'-O-)-methyltransferase 1 (846 aa).

Positions 1-81 (MKRKSDSEQQ…LPDTLAEGSS (81 aa)) are disordered. The short motif at 2–20 (KRKSDSEQQPSVQCRKKKR) is the Bipartite nuclear localization signal element. Residues 27–45 (NLSSTSDDDTQYSNHGTQE) show a composition bias toward polar residues. Positions 87 to 133 (YNSVSQKLMAKMGFREGEGLGKFGQGRKEIVETSKQKGRRGLGMVLK) constitute a G-patch domain. Substrate contacts are provided by residues 203 to 207 (KSAFD) and Arg-218. Positions 231–450 (FFLNRAAMKM…ERYVVCRGLK (220 aa)) constitute a RrmJ-type SAM-dependent 2'-O-MTase domain. Asn-234 provides a ligand contact to S-adenosyl-L-methionine. The active site involves Lys-239. S-adenosyl-L-methionine is bound by residues 277 to 283 (CAGPGGF) and 335 to 336 (DV). Residue Asp-364 is part of the active site. Substrate is bound at residue 374-376 (NIQ). The active-site Proton acceptor is Lys-404. Asn-439 contacts substrate. The region spanning 752 to 786 (KTINEPWSMAYSKSQKRKYFYNSKTKNSQFELPVE) is the WW domain.

Its subcellular location is the nucleus. It carries out the reaction a 5'-end (N(7)-methyl 5'-triphosphoguanosine)-ribonucleoside in mRNA + S-adenosyl-L-methionine = a 5'-end (N(7)-methyl 5'-triphosphoguanosine)-(2'-O-methyl-ribonucleoside) in mRNA + S-adenosyl-L-homocysteine + H(+). In terms of biological role, S-adenosyl-L-methionine-dependent methyltransferase that mediates mRNA cap1 2'-O-ribose methylation to the 5'-cap structure of mRNAs. Methylates the ribose of the first nucleotide of a m(7)GpppG-capped mRNA and small nuclear RNA (snRNA) to produce m(7)GpppRm (cap1). Displays a preference for cap0 transcripts. Cap1 modification is linked to higher levels of translation. May be involved in the interferon response pathway. The chain is Cap-specific mRNA (nucleoside-2'-O-)-methyltransferase 1 (cmtr1) from Xenopus laevis (African clawed frog).